An 824-amino-acid chain; its full sequence is DNA replication helicase (824 aa).

90 to 97 (GTAGAGKT) provides a ligand contact to ATP.

The protein belongs to the herpesviridae helicase family. Associates with the primase and the primase-associated factor to form the helicase-primase complex.

Its subcellular location is the host nucleus. Component of the helicase/primase complex. Unwinds the DNA at the replication forks and generates single-stranded DNA for both leading and lagging strand synthesis. The primase synthesizes short RNA primers on the lagging strand that the polymerase elongates using dNTPs. Possesses helicase-like motifs and therefore may act as the helicase subunit of the complex. The chain is DNA replication helicase from Human herpesvirus 6A (strain Uganda-1102) (HHV-6 variant A).